A 466-amino-acid polypeptide reads, in one-letter code: RuvB-like helicase 2 (466 aa).

74–81 contacts ATP; the sequence is GPPSTGKT.

The protein belongs to the RuvB family. As to quaternary structure, may form heterododecamers with RVB1. Component of the SWR1 chromatin remodeling complex, the INO80 chromatin remodeling complex, and of the R2TP complex.

The protein resides in the nucleus. It catalyses the reaction ATP + H2O = ADP + phosphate + H(+). In terms of biological role, DNA helicase which participates in several chromatin remodeling complexes, including the SWR1 and the INO80 complexes. The SWR1 complex mediates the ATP-dependent exchange of histone H2A for the H2A variant HZT1 leading to transcriptional regulation of selected genes by chromatin remodeling. The INO80 complex remodels chromatin by shifting nucleosomes and is involved in DNA repair. Also involved in pre-rRNA processing. This Yarrowia lipolytica (strain CLIB 122 / E 150) (Yeast) protein is RuvB-like helicase 2 (RVB2).